The following is a 268-amino-acid chain: Exopolysaccharide production negative regulator (268 aa).

The first 22 residues, 1 to 22 (MRAGELKSLRVAVLGMSLAVGA), serve as a signal peptide directing secretion.

Functionally, negatively modulates exopolysaccharide (EPS) biosynthesis. This is Exopolysaccharide production negative regulator (exoR) from Rhizobium meliloti (strain 1021) (Ensifer meliloti).